A 374-amino-acid chain; its full sequence is tRNA (guanine(26)-N(2))-dimethyltransferase (374 aa).

A Trm1 methyltransferase domain is found at 4–368 (IEATEGTTTF…APLPVLYDAI (365 aa)). S-adenosyl-L-methionine is bound by residues arginine 41, arginine 66, aspartate 82, aspartate 108, and alanine 109. Positions 237, 240, 256, and 259 each coordinate Zn(2+).

The protein belongs to the class I-like SAM-binding methyltransferase superfamily. Trm1 family.

It catalyses the reaction guanosine(26) in tRNA + 2 S-adenosyl-L-methionine = N(2)-dimethylguanosine(26) in tRNA + 2 S-adenosyl-L-homocysteine + 2 H(+). Functionally, dimethylates a single guanine residue at position 26 of a number of tRNAs using S-adenosyl-L-methionine as donor of the methyl groups. The chain is tRNA (guanine(26)-N(2))-dimethyltransferase from Methanoregula boonei (strain DSM 21154 / JCM 14090 / 6A8).